A 139-amino-acid chain; its full sequence is Nucleoside diphosphate kinase (139 aa).

Residues K11, F59, R87, T93, R104, and N114 each contribute to the ATP site. Residue H117 is the Pros-phosphohistidine intermediate of the active site.

It belongs to the NDK family. As to quaternary structure, homotetramer. It depends on Mg(2+) as a cofactor.

The protein localises to the cytoplasm. The enzyme catalyses a 2'-deoxyribonucleoside 5'-diphosphate + ATP = a 2'-deoxyribonucleoside 5'-triphosphate + ADP. The catalysed reaction is a ribonucleoside 5'-diphosphate + ATP = a ribonucleoside 5'-triphosphate + ADP. Major role in the synthesis of nucleoside triphosphates other than ATP. The ATP gamma phosphate is transferred to the NDP beta phosphate via a ping-pong mechanism, using a phosphorylated active-site intermediate. This is Nucleoside diphosphate kinase from Flavobacterium psychrophilum (strain ATCC 49511 / DSM 21280 / CIP 103535 / JIP02/86).